A 226-amino-acid chain; its full sequence is GTP-binding nuclear protein Ran-3 (226 aa).

The 165-residue stretch at 14–178 folds into the Small GTPase Ran-type domain; sequence GYPSFKLILV…LYLARKLTGD (165 aa). A GTP-binding site is contributed by 25-32; that stretch reads DGGTGKTT. The tract at residues 44 to 52 is switch-I; the sequence is KRYEPTIGV. GTP contacts are provided by residues G75, 129–132, and 157–159; these read NKVD and SAK. The segment at 75–91 is switch-II; sequence GQEKFGGLRDGYYIHGH.

Belongs to the small GTPase superfamily. Ran family. As to quaternary structure, found in a nuclear export complex with RanGTP, exportin and pre-miRNA.

Its subcellular location is the nucleus. GTP-binding protein involved in nucleocytoplasmic transport. Required for the import of protein into the nucleus and also for RNA export. Involved in chromatin condensation and control of cell cycle. The polypeptide is GTP-binding nuclear protein Ran-3 (RAN3) (Oryza sativa subsp. indica (Rice)).